The sequence spans 1097 residues: Apolipoprotein B receptor (1097 aa).

5 disordered regions span residues 64–249 (QEDL…KGEE), 262–376 (AWGT…WTTS), 410–739 (EEEG…SRRG), 789–866 (GWDS…ARAE), and 889–1097 (VGWQ…PKPQ). Composition is skewed to basic and acidic residues over residues 83 to 92 (GPGDDRRHEV), 158 to 177 (ERQE…RSWE), and 185 to 208 (VRAR…ETEG). The segment covering 209 to 218 (KAGAVGPKAA) has biased composition (low complexity). Composition is skewed to basic and acidic residues over residues 219 to 232 (GDNR…READ) and 279 to 302 (GREE…EEAR). A compositionally biased stretch (low complexity) spans 312–330 (TASGGEEAETASGGEEAGT). Gly residues predominate over residues 331 to 362 (ASGGEEAGIASGGEAGTASGGEEAGTASGGEE). At Ser458 the chain carries Phosphoserine. Basic and acidic residues-rich tracts occupy residues 463–487 (VDLR…RMEE) and 496–505 (EERGSSRDPV). Ser510 is subject to Phosphoserine. A Phosphothreonine modification is found at Thr572. Ser594 bears the Phosphoserine mark. Basic and acidic residues-rich tracts occupy residues 594-606 (SKEE…EAGP) and 626-637 (NRTRKDMERGNT). A compositionally biased stretch (acidic residues) spans 640–652 (DAADGEQREEEET). Basic and acidic residues-rich tracts occupy residues 791-800 (DSKEKEEAAA), 892-918 (QERE…RLLD), and 928-950 (RRAE…EEQP). Over residues 1000–1017 (SRVHLSRSSSQRRSRPSF) the composition is skewed to basic residues. The segment covering 1041–1050 (APEQRPLQLE) has biased composition (low complexity).

As to quaternary structure, homodimer. In terms of processing, there are 2 forms in macrophages, the membrane-binding proteins 200 kDa (MBP 200) and 235 kDa (MBP 235), that can be reduced into a single active ligand-binding species with intermediate mobility (MBP 200R). As to expression, expressed in peripheral blood leukocytes &gt; bone marrow = spleen &gt; lymph node, and only faintly visible in appendix and thymus. Expressed in the brain, heart, kidney, liver, lung, pancreas, and placenta. Expressed primarily by reticuloendothelial cells: monocytes, macrophages, and endothelial cells. Expressed in atherosclerotic lesion foam cells.

Its subcellular location is the cell membrane. Functionally, macrophage receptor that binds to the apolipoprotein B48 (APOB) of dietary triglyceride (TG)-rich lipoproteins (TRL) or to a like domain of APOB in hypertriglyceridemic very low density lipoprotein (HTG-VLDL). Binds and internalizes TRL when out of the context of the macrophage. May provide essential lipids to reticuloendothelial cells. Could also be involved in foam cell formation with elevated TRL and remnant lipoprotein (RLP). Mediates the rapid high-affinity uptake of chylomicrons (CM), HTG-VLDL, and trypsinized (tryp) VLDL devoid of APOE in vitro in macrophages. This is Apolipoprotein B receptor from Homo sapiens (Human).